We begin with the raw amino-acid sequence, 279 residues long: Acetylglutamate kinase (279 aa).

Residues 64–65 (GG), Arg86, and Asn177 each bind substrate.

It belongs to the acetylglutamate kinase family. ArgB subfamily.

It is found in the cytoplasm. It catalyses the reaction N-acetyl-L-glutamate + ATP = N-acetyl-L-glutamyl 5-phosphate + ADP. The protein operates within amino-acid biosynthesis; L-arginine biosynthesis; N(2)-acetyl-L-ornithine from L-glutamate: step 2/4. Its function is as follows. Catalyzes the ATP-dependent phosphorylation of N-acetyl-L-glutamate. This is Acetylglutamate kinase from Campylobacter jejuni subsp. doylei (strain ATCC BAA-1458 / RM4099 / 269.97).